The sequence spans 434 residues: D-amino acid dehydrogenase (434 aa).

3–17 (VVILGSGVVGVTSAW) contacts FAD.

The protein belongs to the DadA oxidoreductase family. Requires FAD as cofactor.

It catalyses the reaction a D-alpha-amino acid + A + H2O = a 2-oxocarboxylate + AH2 + NH4(+). Its pathway is amino-acid degradation; D-alanine degradation; NH(3) and pyruvate from D-alanine: step 1/1. Oxidative deamination of D-amino acids. In Yersinia pseudotuberculosis serotype O:3 (strain YPIII), this protein is D-amino acid dehydrogenase.